The following is a 292-amino-acid chain: Formamidopyrimidine-DNA glycosylase (292 aa).

The active-site Schiff-base intermediate with DNA is Pro-2. Glu-3 functions as the Proton donor in the catalytic mechanism. The active-site Proton donor; for beta-elimination activity is the Lys-58. His-98, Arg-128, and Arg-173 together coordinate DNA. The segment at 258–292 (LVYDRAGQPCRVCATPVRQIVQGQRSTFYCPNCQH) adopts an FPG-type zinc-finger fold. Arg-282 (proton donor; for delta-elimination activity) is an active-site residue.

Belongs to the FPG family. In terms of assembly, monomer. Requires Zn(2+) as cofactor.

It carries out the reaction Hydrolysis of DNA containing ring-opened 7-methylguanine residues, releasing 2,6-diamino-4-hydroxy-5-(N-methyl)formamidopyrimidine.. It catalyses the reaction 2'-deoxyribonucleotide-(2'-deoxyribose 5'-phosphate)-2'-deoxyribonucleotide-DNA = a 3'-end 2'-deoxyribonucleotide-(2,3-dehydro-2,3-deoxyribose 5'-phosphate)-DNA + a 5'-end 5'-phospho-2'-deoxyribonucleoside-DNA + H(+). Functionally, involved in base excision repair of DNA damaged by oxidation or by mutagenic agents. Acts as a DNA glycosylase that recognizes and removes damaged bases. Has a preference for oxidized purines, such as 7,8-dihydro-8-oxoguanine (8-oxoG). Has AP (apurinic/apyrimidinic) lyase activity and introduces nicks in the DNA strand. Cleaves the DNA backbone by beta-delta elimination to generate a single-strand break at the site of the removed base with both 3'- and 5'-phosphates. In Cupriavidus necator (strain ATCC 17699 / DSM 428 / KCTC 22496 / NCIMB 10442 / H16 / Stanier 337) (Ralstonia eutropha), this protein is Formamidopyrimidine-DNA glycosylase.